An 873-amino-acid chain; its full sequence is Leucine--tRNA ligase (873 aa).

The 'HIGH' region signature appears at 42-52; sequence PYPSGKLHMGH. A disordered region spans residues 624-643; it reads PVEIGGTEKMSKSKNNGVDP. The 'KMSKS' region signature appears at 632–636; it reads KMSKS. K635 is an ATP binding site.

The protein belongs to the class-I aminoacyl-tRNA synthetase family.

It localises to the cytoplasm. It carries out the reaction tRNA(Leu) + L-leucine + ATP = L-leucyl-tRNA(Leu) + AMP + diphosphate. In Pseudomonas aeruginosa (strain LESB58), this protein is Leucine--tRNA ligase.